The primary structure comprises 388 residues: Succinate--CoA ligase [ADP-forming] subunit beta (388 aa).

Residues Lys-9–Glu-244 enclose the ATP-grasp domain. Residues Lys-46, Gly-53–Gly-55, Glu-99, Thr-102, and Glu-107 contribute to the ATP site. Asn-199 and Asp-213 together coordinate Mg(2+). Substrate contacts are provided by residues Asn-264 and Gly-321–Val-323.

The protein belongs to the succinate/malate CoA ligase beta subunit family. As to quaternary structure, heterotetramer of two alpha and two beta subunits. Mg(2+) serves as cofactor.

It carries out the reaction succinate + ATP + CoA = succinyl-CoA + ADP + phosphate. It catalyses the reaction GTP + succinate + CoA = succinyl-CoA + GDP + phosphate. It functions in the pathway carbohydrate metabolism; tricarboxylic acid cycle; succinate from succinyl-CoA (ligase route): step 1/1. Functionally, succinyl-CoA synthetase functions in the citric acid cycle (TCA), coupling the hydrolysis of succinyl-CoA to the synthesis of either ATP or GTP and thus represents the only step of substrate-level phosphorylation in the TCA. The beta subunit provides nucleotide specificity of the enzyme and binds the substrate succinate, while the binding sites for coenzyme A and phosphate are found in the alpha subunit. The protein is Succinate--CoA ligase [ADP-forming] subunit beta of Marinobacter nauticus (strain ATCC 700491 / DSM 11845 / VT8) (Marinobacter aquaeolei).